We begin with the raw amino-acid sequence, 944 residues long: Bifunctional glutamine synthetase adenylyltransferase/adenylyl-removing enzyme (944 aa).

The tract at residues 1-440 (MSANSVFQQL…IFTQLIGEDD (440 aa)) is adenylyl removase. The segment at 448–944 (VSEFKRLWLL…LSSKQKWLDE (497 aa)) is adenylyl transferase.

Belongs to the GlnE family. It depends on Mg(2+) as a cofactor.

The enzyme catalyses [glutamine synthetase]-O(4)-(5'-adenylyl)-L-tyrosine + phosphate = [glutamine synthetase]-L-tyrosine + ADP. It carries out the reaction [glutamine synthetase]-L-tyrosine + ATP = [glutamine synthetase]-O(4)-(5'-adenylyl)-L-tyrosine + diphosphate. Involved in the regulation of glutamine synthetase GlnA, a key enzyme in the process to assimilate ammonia. When cellular nitrogen levels are high, the C-terminal adenylyl transferase (AT) inactivates GlnA by covalent transfer of an adenylyl group from ATP to specific tyrosine residue of GlnA, thus reducing its activity. Conversely, when nitrogen levels are low, the N-terminal adenylyl removase (AR) activates GlnA by removing the adenylyl group by phosphorolysis, increasing its activity. The regulatory region of GlnE binds the signal transduction protein PII (GlnB) which indicates the nitrogen status of the cell. In Proteus mirabilis (strain HI4320), this protein is Bifunctional glutamine synthetase adenylyltransferase/adenylyl-removing enzyme.